The primary structure comprises 249 residues: Ribonuclease PH (249 aa).

Phosphate contacts are provided by residues R86 and 124–126; that span reads GTR.

The protein belongs to the RNase PH family. As to quaternary structure, homohexameric ring arranged as a trimer of dimers.

It carries out the reaction tRNA(n+1) + phosphate = tRNA(n) + a ribonucleoside 5'-diphosphate. Functionally, phosphorolytic 3'-5' exoribonuclease that plays an important role in tRNA 3'-end maturation. Removes nucleotide residues following the 3'-CCA terminus of tRNAs; can also add nucleotides to the ends of RNA molecules by using nucleoside diphosphates as substrates, but this may not be physiologically important. Probably plays a role in initiation of 16S rRNA degradation (leading to ribosome degradation) during starvation. This is Ribonuclease PH from Clostridium botulinum (strain Eklund 17B / Type B).